A 140-amino-acid chain; its full sequence is Putative pre-16S rRNA nuclease (140 aa).

This sequence belongs to the YqgF nuclease family.

It is found in the cytoplasm. In terms of biological role, could be a nuclease involved in processing of the 5'-end of pre-16S rRNA. The sequence is that of Putative pre-16S rRNA nuclease from Aeromonas hydrophila.